The following is a 117-amino-acid chain: MARVTVEDCVDKVPNRFELVMLAAHRAREIASGSSLTIDRDNDKNPVVALREIAEETQSAESLRERMIESHQTQIEVDEPEEDQMALLMGSEVDRPVQDDMSEEKLLRALMEAQGQN.

This sequence belongs to the RNA polymerase subunit omega family. The RNAP catalytic core consists of 2 alpha, 1 beta, 1 beta' and 1 omega subunit. When a sigma factor is associated with the core the holoenzyme is formed, which can initiate transcription.

The enzyme catalyses RNA(n) + a ribonucleoside 5'-triphosphate = RNA(n+1) + diphosphate. Promotes RNA polymerase assembly. Latches the N- and C-terminal regions of the beta' subunit thereby facilitating its interaction with the beta and alpha subunits. The polypeptide is DNA-directed RNA polymerase subunit omega (Cereibacter sphaeroides (strain ATCC 17029 / ATH 2.4.9) (Rhodobacter sphaeroides)).